Here is a 512-residue protein sequence, read N- to C-terminus: Lysine--tRNA ligase (512 aa).

Residues Glu408 and Glu415 each coordinate Mg(2+).

It belongs to the class-II aminoacyl-tRNA synthetase family. As to quaternary structure, homodimer. It depends on Mg(2+) as a cofactor.

It is found in the cytoplasm. The catalysed reaction is tRNA(Lys) + L-lysine + ATP = L-lysyl-tRNA(Lys) + AMP + diphosphate. In Prochlorococcus marinus (strain MIT 9301), this protein is Lysine--tRNA ligase.